We begin with the raw amino-acid sequence, 460 residues long: UDP-N-acetylmuramate--L-alanine ligase (460 aa).

118-124 serves as a coordination point for ATP; it reads GAHGKTT.

The protein belongs to the MurCDEF family.

Its subcellular location is the cytoplasm. The catalysed reaction is UDP-N-acetyl-alpha-D-muramate + L-alanine + ATP = UDP-N-acetyl-alpha-D-muramoyl-L-alanine + ADP + phosphate + H(+). Its pathway is cell wall biogenesis; peptidoglycan biosynthesis. Functionally, cell wall formation. In Clostridium botulinum (strain Alaska E43 / Type E3), this protein is UDP-N-acetylmuramate--L-alanine ligase.